Here is a 181-residue protein sequence, read N- to C-terminus: ADP-ribosylation factor 1 (181 aa).

The N-myristoyl glycine moiety is linked to residue Gly2. Residues 24-31, 67-71, and 126-129 contribute to the GTP site; these read GLDAAGKT, DVGGQ, and NKQD.

The protein belongs to the small GTPase superfamily. Arf family. As to expression, seedling shoots.

It is found in the golgi apparatus. It carries out the reaction GTP + H2O = GDP + phosphate + H(+). Functionally, GTP-binding protein involved in protein trafficking; may modulate vesicle budding and uncoating within the Golgi apparatus. The sequence is that of ADP-ribosylation factor 1 from Oryza sativa subsp. japonica (Rice).